We begin with the raw amino-acid sequence, 185 residues long: Ribosome-recycling factor (185 aa).

Belongs to the RRF family.

It localises to the cytoplasm. In terms of biological role, responsible for the release of ribosomes from messenger RNA at the termination of protein biosynthesis. May increase the efficiency of translation by recycling ribosomes from one round of translation to another. This is Ribosome-recycling factor from Roseiflexus castenholzii (strain DSM 13941 / HLO8).